The following is a 490-amino-acid chain: Aspartyl/glutamyl-tRNA(Asn/Gln) amidotransferase subunit B (490 aa).

It belongs to the GatB/GatE family. GatB subfamily. In terms of assembly, heterotrimer of A, B and C subunits.

It catalyses the reaction L-glutamyl-tRNA(Gln) + L-glutamine + ATP + H2O = L-glutaminyl-tRNA(Gln) + L-glutamate + ADP + phosphate + H(+). It carries out the reaction L-aspartyl-tRNA(Asn) + L-glutamine + ATP + H2O = L-asparaginyl-tRNA(Asn) + L-glutamate + ADP + phosphate + 2 H(+). Allows the formation of correctly charged Asn-tRNA(Asn) or Gln-tRNA(Gln) through the transamidation of misacylated Asp-tRNA(Asn) or Glu-tRNA(Gln) in organisms which lack either or both of asparaginyl-tRNA or glutaminyl-tRNA synthetases. The reaction takes place in the presence of glutamine and ATP through an activated phospho-Asp-tRNA(Asn) or phospho-Glu-tRNA(Gln). The sequence is that of Aspartyl/glutamyl-tRNA(Asn/Gln) amidotransferase subunit B from Methylorubrum extorquens (strain CM4 / NCIMB 13688) (Methylobacterium extorquens).